A 153-amino-acid polypeptide reads, in one-letter code: Superoxide dismutase [Cu-Zn] (153 aa).

The Cu cation site is built by histidine 45, histidine 47, and histidine 62. A disulfide bridge connects residues cysteine 56 and cysteine 145. Residues histidine 62, histidine 70, histidine 79, and aspartate 82 each coordinate Zn(2+). Histidine 119 contributes to the Cu cation binding site.

Belongs to the Cu-Zn superoxide dismutase family. Homodimer. The cofactor is Cu cation. Zn(2+) is required as a cofactor.

The protein resides in the cytoplasm. It catalyses the reaction 2 superoxide + 2 H(+) = H2O2 + O2. In terms of biological role, destroys radicals which are normally produced within the cells and which are toxic to biological systems. The protein is Superoxide dismutase [Cu-Zn] (Sod) of Chymomyza amoena.